The following is a 189-amino-acid chain: Ribosome maturation factor RimM (189 aa).

One can recognise a PRC barrel domain in the interval 96–169; that stretch reads EDEFFQTDLI…TLLVEPYAAG (74 aa). The segment at 170 to 189 is disordered; it reads LIADDEDERPQNEKKKPKKS.

The protein belongs to the RimM family. As to quaternary structure, binds ribosomal protein uS19.

The protein resides in the cytoplasm. An accessory protein needed during the final step in the assembly of 30S ribosomal subunit, possibly for assembly of the head region. Essential for efficient processing of 16S rRNA. May be needed both before and after RbfA during the maturation of 16S rRNA. It has affinity for free ribosomal 30S subunits but not for 70S ribosomes. This Brucella anthropi (strain ATCC 49188 / DSM 6882 / CCUG 24695 / JCM 21032 / LMG 3331 / NBRC 15819 / NCTC 12168 / Alc 37) (Ochrobactrum anthropi) protein is Ribosome maturation factor RimM.